We begin with the raw amino-acid sequence, 357 residues long: 3-isopropylmalate dehydrogenase (357 aa).

76–89 (GPQWDTIDPSLRPE) contacts NAD(+). Residues arginine 96, arginine 106, arginine 134, and aspartate 224 each coordinate substrate. Residues aspartate 224, aspartate 248, and aspartate 252 each contribute to the Mg(2+) site. 282-294 (GSAPDIAGKGIAN) lines the NAD(+) pocket.

Belongs to the isocitrate and isopropylmalate dehydrogenases family. LeuB type 1 subfamily. As to quaternary structure, homodimer. Mg(2+) serves as cofactor. Requires Mn(2+) as cofactor.

Its subcellular location is the cytoplasm. It catalyses the reaction (2R,3S)-3-isopropylmalate + NAD(+) = 4-methyl-2-oxopentanoate + CO2 + NADH. It functions in the pathway amino-acid biosynthesis; L-leucine biosynthesis; L-leucine from 3-methyl-2-oxobutanoate: step 3/4. Catalyzes the oxidation of 3-carboxy-2-hydroxy-4-methylpentanoate (3-isopropylmalate) to 3-carboxy-4-methyl-2-oxopentanoate. The product decarboxylates to 4-methyl-2 oxopentanoate. The protein is 3-isopropylmalate dehydrogenase of Xanthomonas oryzae pv. oryzae (strain MAFF 311018).